A 170-amino-acid chain; its full sequence is Heat shock protein beta-7 (170 aa).

The interval 1 to 39 (MSHRTSSTFRAERSFHSSSSSSSSSTSSSASRALPAQDP) is disordered. A required for localization to SC35 splicing speckles region spans residues 1–71 (MSHRTSSTFR…PLAFPARPGG (71 aa)). Over residues 16-31 (HSSSSSSSSSTSSSAS) the composition is skewed to low complexity. Residues 62–170 (PLAFPARPGG…QQTFRTEIKI (109 aa)) enclose the sHSP domain.

The protein belongs to the small heat shock protein (HSP20) family. As to quaternary structure, interacts with C-terminal domain of actin-binding protein 280. Isoform 1 is highly expressed in adult and fetal heart, skeletal muscle, and at a much lower levels in adipose tissue and in aorta. Undetectable in other tissues. Isoform 2 and isoform 3 are poorly detected in heart.

The protein localises to the cytoplasm. It localises to the nucleus. Its subcellular location is the cajal body. The protein is Heat shock protein beta-7 (HSPB7) of Homo sapiens (Human).